We begin with the raw amino-acid sequence, 404 residues long: L-cysteine:1D-myo-inositol 2-amino-2-deoxy-alpha-D-glucopyranoside ligase (404 aa).

Positions 1–20 (MRTWPTPDVPPLPRTGAPAP) are disordered. Zn(2+) is bound at residue Cys-45. L-cysteinyl-5'-AMP contacts are provided by residues 45-48 (CGIT), Thr-60, and 83-85 (NVT). Positions 47-57 (ITPYDATHLGH) match the 'HIGH' region motif. Positions 185–190 (ERGGDP) match the 'ERGGDP' region motif. The segment at 185–216 (ERGGDPDRPGKKHPLDPALWRGEQPGEPSWDG) is disordered. Residues 186-199 (RGGDPDRPGKKHPL) show a composition bias toward basic and acidic residues. Trp-226 serves as a coordination point for L-cysteinyl-5'-AMP. Cys-230 is a Zn(2+) binding site. 248-250 (GAD) provides a ligand contact to L-cysteinyl-5'-AMP. Zn(2+) is bound at residue His-255. Leu-280 contacts L-cysteinyl-5'-AMP. The 'KMSKS' region signature appears at 286 to 290 (KMSKS).

This sequence belongs to the class-I aminoacyl-tRNA synthetase family. MshC subfamily. In terms of assembly, monomer. Zn(2+) serves as cofactor.

It catalyses the reaction 1D-myo-inositol 2-amino-2-deoxy-alpha-D-glucopyranoside + L-cysteine + ATP = 1D-myo-inositol 2-(L-cysteinylamino)-2-deoxy-alpha-D-glucopyranoside + AMP + diphosphate + H(+). Catalyzes the ATP-dependent condensation of GlcN-Ins and L-cysteine to form L-Cys-GlcN-Ins. This Xylanimonas cellulosilytica (strain DSM 15894 / JCM 12276 / CECT 5975 / KCTC 9989 / LMG 20990 / NBRC 107835 / XIL07) protein is L-cysteine:1D-myo-inositol 2-amino-2-deoxy-alpha-D-glucopyranoside ligase.